Here is a 161-residue protein sequence, read N- to C-terminus: Phosphopantetheine adenylyltransferase (161 aa).

Substrate is bound at residue Ser-9. ATP-binding positions include 9-10 (SF) and His-17. The substrate site is built by Lys-41, Leu-73, and Arg-87. ATP is bound by residues 88–90 (GLR), Glu-98, and 123–129 (YTFISSS).

It belongs to the bacterial CoaD family. As to quaternary structure, homohexamer. The cofactor is Mg(2+).

It is found in the cytoplasm. The catalysed reaction is (R)-4'-phosphopantetheine + ATP + H(+) = 3'-dephospho-CoA + diphosphate. It functions in the pathway cofactor biosynthesis; coenzyme A biosynthesis; CoA from (R)-pantothenate: step 4/5. Its function is as follows. Reversibly transfers an adenylyl group from ATP to 4'-phosphopantetheine, yielding dephospho-CoA (dPCoA) and pyrophosphate. The chain is Phosphopantetheine adenylyltransferase from Syntrophomonas wolfei subsp. wolfei (strain DSM 2245B / Goettingen).